The primary structure comprises 277 residues: Undecaprenyl-diphosphatase (277 aa).

A run of 5 helical transmembrane segments spans residues 85-105, 109-129, 188-208, 218-238, and 256-276; these read VNIV…AGAI, LFAP…ILWV, ATEF…VYSV, ADIP…FLCV, and YRIG…VVWA.

This sequence belongs to the UppP family.

Its subcellular location is the cell inner membrane. The catalysed reaction is di-trans,octa-cis-undecaprenyl diphosphate + H2O = di-trans,octa-cis-undecaprenyl phosphate + phosphate + H(+). Its function is as follows. Catalyzes the dephosphorylation of undecaprenyl diphosphate (UPP). Confers resistance to bacitracin. This Herminiimonas arsenicoxydans protein is Undecaprenyl-diphosphatase.